Here is a 234-residue protein sequence, read N- to C-terminus: Adenosine 5'-phosphosulfate reductase (234 aa).

[4Fe-4S] cluster is bound by residues C120, C121, C203, and C206. Residue C229 is the Nucleophile; cysteine thiosulfonate intermediate of the active site.

It belongs to the PAPS reductase family. CysH subfamily. It depends on [4Fe-4S] cluster as a cofactor.

The protein localises to the cytoplasm. The catalysed reaction is [thioredoxin]-disulfide + sulfite + AMP + 2 H(+) = adenosine 5'-phosphosulfate + [thioredoxin]-dithiol. It participates in sulfur metabolism; hydrogen sulfide biosynthesis; sulfite from sulfate. Catalyzes the formation of sulfite from adenosine 5'-phosphosulfate (APS) using thioredoxin as an electron donor. The sequence is that of Adenosine 5'-phosphosulfate reductase from Bacillus cereus (strain ATCC 14579 / DSM 31 / CCUG 7414 / JCM 2152 / NBRC 15305 / NCIMB 9373 / NCTC 2599 / NRRL B-3711).